The sequence spans 334 residues: Phosphate acyltransferase (334 aa).

This sequence belongs to the PlsX family. As to quaternary structure, homodimer. Probably interacts with PlsY.

The protein resides in the cytoplasm. The catalysed reaction is a fatty acyl-[ACP] + phosphate = an acyl phosphate + holo-[ACP]. The protein operates within lipid metabolism; phospholipid metabolism. In terms of biological role, catalyzes the reversible formation of acyl-phosphate (acyl-PO(4)) from acyl-[acyl-carrier-protein] (acyl-ACP). This enzyme utilizes acyl-ACP as fatty acyl donor, but not acyl-CoA. The chain is Phosphate acyltransferase from Thermotoga petrophila (strain ATCC BAA-488 / DSM 13995 / JCM 10881 / RKU-1).